The primary structure comprises 84 residues: Small ribosomal subunit protein uS17 (84 aa).

The protein belongs to the universal ribosomal protein uS17 family. Part of the 30S ribosomal subunit.

Functionally, one of the primary rRNA binding proteins, it binds specifically to the 5'-end of 16S ribosomal RNA. The polypeptide is Small ribosomal subunit protein uS17 (Aliivibrio fischeri (strain ATCC 700601 / ES114) (Vibrio fischeri)).